The following is a 523-amino-acid chain: UDP-N-acetylmuramyl-tripeptide synthetase (523 aa).

Ser-38 is a UDP-N-acetyl-alpha-D-muramoyl-L-alanyl-D-glutamate binding site. An ATP-binding site is contributed by 116 to 122 (GTKGKTT). UDP-N-acetyl-alpha-D-muramoyl-L-alanyl-D-glutamate-binding positions include 162–163 (TT), Ser-189, and Arg-197. Residue Lys-231 is modified to N6-carboxylysine.

This sequence belongs to the MurCDEF family. MurE subfamily. In terms of processing, carboxylation is probably crucial for Mg(2+) binding and, consequently, for the gamma-phosphate positioning of ATP.

Its subcellular location is the cytoplasm. The protein operates within cell wall biogenesis; peptidoglycan biosynthesis. Catalyzes the addition of an amino acid to the nucleotide precursor UDP-N-acetylmuramoyl-L-alanyl-D-glutamate (UMAG) in the biosynthesis of bacterial cell-wall peptidoglycan. The polypeptide is UDP-N-acetylmuramyl-tripeptide synthetase (Lactobacillus acidophilus (strain ATCC 700396 / NCK56 / N2 / NCFM)).